The primary structure comprises 447 residues: Signal recognition particle 54 kDa protein (447 aa).

GTP contacts are provided by residues 103-110 (GVQGSGKT), 185-189 (DTAGR), and 245-248 (TKMD).

The protein belongs to the GTP-binding SRP family. SRP54 subfamily. In terms of assembly, part of the signal recognition particle protein translocation system, which is composed of SRP and FtsY. Archaeal SRP consists of a 7S RNA molecule of 300 nucleotides and two protein subunits: SRP54 and SRP19.

Its subcellular location is the cytoplasm. It catalyses the reaction GTP + H2O = GDP + phosphate + H(+). Its function is as follows. Involved in targeting and insertion of nascent membrane proteins into the cytoplasmic membrane. Binds to the hydrophobic signal sequence of the ribosome-nascent chain (RNC) as it emerges from the ribosomes. The SRP-RNC complex is then targeted to the cytoplasmic membrane where it interacts with the SRP receptor FtsY. This chain is Signal recognition particle 54 kDa protein, found in Saccharolobus islandicus (strain L.S.2.15 / Lassen #1) (Sulfolobus islandicus).